The following is a 206-amino-acid chain: Large ribosomal subunit protein eL13z (206 aa).

Residues 183–206 are disordered; the sequence is ERTNKRHAGARAKRAADAEKEEKK. Over residues 186-195 the composition is skewed to basic residues; that stretch reads NKRHAGARAK. The span at 196–206 shows a compositional bias: basic and acidic residues; that stretch reads RAADAEKEEKK.

Belongs to the eukaryotic ribosomal protein eL13 family.

The polypeptide is Large ribosomal subunit protein eL13z (Brassica napus (Rape)).